Here is a 408-residue protein sequence, read N- to C-terminus: Collagen and calcium-binding EGF domain-containing protein 1 (408 aa).

The first 35 residues, 1 to 35 (MVPPPLPSRGGAAKRQLGKSLGPLLLLLALGHTWT), serve as a signal peptide directing secretion. The region spanning 135–176 (DIDECATSNTTLCAHICINTMGSYHCECREGYILEDDGRTCT) is the EGF-like; calcium-binding domain. 3 disulfides stabilise this stretch: Cys-139–Cys-151, Cys-147–Cys-160, and Cys-162–Cys-175. N-linked (GlcNAc...) asparagine glycosylation occurs at Asn-143. N-linked (GlcNAc...) asparagine glycosylation is present at Asn-183. Disordered stretches follow at residues 246 to 335 (YLPG…GPPG) and 361 to 408 (HRTH…NFYP). Collagen-like domains follow at residues 247 to 292 (LPGP…PMGP) and 302 to 335 (GRRG…GPPG). The span at 272 to 281 (PGMPGPPGQP) shows a compositional bias: pro residues. Residues 283-294 (PRGSMGPMGPSP) are compositionally biased toward low complexity. Pro residues predominate over residues 325-334 (PGPPGSPGPP). An O-linked (Xyl...) (chondroitin sulfate) serine glycan is attached at Ser-387. A compositionally biased stretch (basic and acidic residues) spans 390–402 (DYSRRTEARDPEA).

Belongs to the CCBE1 family.

The protein resides in the secreted. Required for lymphangioblast budding and angiogenic sprouting from venous endothelium during embryogenesis. The sequence is that of Collagen and calcium-binding EGF domain-containing protein 1 (Ccbe1) from Mus musculus (Mouse).